The primary structure comprises 162 residues: MEAIKDFFGSLLLTELFKGLRLTGKYFFKRKVTLRYPMEKTPTSARFRGLHALRRYPNGEERCIACKLCEAVCPALAITIESEQRDDGTRRTTRYDIDLTKCIFCGFCEESCPVDSIVETHIHEYHGEKRGDLYFTKDMLLAVGDRYEAEIARRRAEDAPYR.

2 consecutive 4Fe-4S ferredoxin-type domains span residues 53-83 (LRRYPNGEERCIACKLCEAVCPALAITIESE) and 93-122 (TRYDIDLTKCIFCGFCEESCPVDSIVETHI). [4Fe-4S] cluster contacts are provided by Cys63, Cys66, Cys69, Cys73, Cys102, Cys105, Cys108, and Cys112.

The protein belongs to the complex I 23 kDa subunit family. In terms of assembly, NDH-1 is composed of 14 different subunits. Subunits NuoA, H, J, K, L, M, N constitute the membrane sector of the complex. [4Fe-4S] cluster is required as a cofactor.

The protein localises to the cell inner membrane. The enzyme catalyses a quinone + NADH + 5 H(+)(in) = a quinol + NAD(+) + 4 H(+)(out). Its function is as follows. NDH-1 shuttles electrons from NADH, via FMN and iron-sulfur (Fe-S) centers, to quinones in the respiratory chain. The immediate electron acceptor for the enzyme in this species is believed to be ubiquinone. Couples the redox reaction to proton translocation (for every two electrons transferred, four hydrogen ions are translocated across the cytoplasmic membrane), and thus conserves the redox energy in a proton gradient. The sequence is that of NADH-quinone oxidoreductase subunit I from Bordetella bronchiseptica (strain ATCC BAA-588 / NCTC 13252 / RB50) (Alcaligenes bronchisepticus).